The primary structure comprises 182 residues: Isopentenyl-diphosphate Delta-isomerase (182 aa).

Residues histidine 25 and histidine 32 each coordinate Mn(2+). Residues leucine 30 to methionine 164 enclose the Nudix hydrolase domain. Residue cysteine 67 is part of the active site. Histidine 69 lines the Mn(2+) pocket. Glutamate 87 contacts Mg(2+). Mn(2+)-binding residues include glutamate 114 and glutamate 116. The active site involves glutamate 116.

The protein belongs to the IPP isomerase type 1 family. In terms of assembly, homodimer. The cofactor is Mg(2+). It depends on Mn(2+) as a cofactor.

The protein resides in the cytoplasm. The enzyme catalyses isopentenyl diphosphate = dimethylallyl diphosphate. The protein operates within isoprenoid biosynthesis; dimethylallyl diphosphate biosynthesis; dimethylallyl diphosphate from isopentenyl diphosphate: step 1/1. In terms of biological role, catalyzes the 1,3-allylic rearrangement of the homoallylic substrate isopentenyl (IPP) to its highly electrophilic allylic isomer, dimethylallyl diphosphate (DMAPP). This is Isopentenyl-diphosphate Delta-isomerase from Escherichia coli O7:K1 (strain IAI39 / ExPEC).